An 867-amino-acid polypeptide reads, in one-letter code: Probable potassium transporter 15 (867 aa).

The span at 1 to 13 (MAASSSSSASASA) shows a compositional bias: low complexity. The interval 1 to 88 (MAASSSSSAS…EGEGEDGEKQ (88 aa)) is disordered. Residues 1–124 (MAASSSSSAS…DSEEFDFGRT (124 aa)) lie on the Cytoplasmic side of the membrane. Acidic residues predominate over residues 32–44 (TEEDDEGEEDGDT). Residues 45–54 (VEAAAAAVGA) show a composition bias toward low complexity. Acidic residues predominate over residues 63–84 (SEEEEDEEDGGGGGEGEGEGED). Residues 125 to 145 (MFLALQTLAVVFGDIGISPLY) traverse the membrane as a helical segment. Residues 146-167 (TFDVMFSKYPILGEEDVLGALS) are Extracellular-facing. Residues 168 to 188 (LVLYTLISMPLVKYVLVVLWA) form a helical membrane-spanning segment. Residues 189-252 (NDDGEGGIFA…KLESSLLLKK (64 aa)) are Cytoplasmic-facing. The helical transmembrane segment at 253–273 (LLLGLVLFGTAMFISNGVITP) threads the bilayer. The Extracellular portion of the chain corresponds to 274-285 (AMSVLSAVSGLK). The helical transmembrane segment at 286 to 306 (VGIPNASQGLVVMISVVLLVI) threads the bilayer. Residues 307-317 (LYSVQRYATSK) lie on the Cytoplasmic side of the membrane. Residues 318–338 (MGFALGPSLLIWFCCLGGIGI) form a helical membrane-spanning segment. Residues 339-365 (YNLSTYGPAAFKAFNPLYIIYYFGRNP) lie on the Extracellular side of the membrane. An N-linked (GlcNAc...) asparagine glycan is attached at asparagine 340. The chain crosses the membrane as a helical span at residues 366 to 386 (FQAWLSLAGCLLCATGSEAIF). Residues 387-400 (ANLSYFPVRYVQSM) lie on the Cytoplasmic side of the membrane. Residues 401–421 (FALLVLPCLVLAYLGQGAFLI) form a helical membrane-spanning segment. The Extracellular portion of the chain corresponds to 422 to 433 (ANQNSSEQIFFS). An N-linked (GlcNAc...) asparagine glycan is attached at asparagine 425. Residues 434 to 454 (SIPSGVFWPVFLIANLAALIA) form a helical membrane-spanning segment. Topologically, residues 455–490 (SRTMTTAIFQCLKQSIALGCFPRLKIIHTSRKFMAK) are cytoplasmic. The chain crosses the membrane as a helical span at residues 491–511 (IYIPVVNWFLLFSCLGFILLF). Topologically, residues 512–522 (RSIYDVGNAYA) are extracellular. Residues 523–543 (IAELGVMIMATVYVTIIMLLI) form a helical membrane-spanning segment. Topologically, residues 544-545 (WE) are cytoplasmic. The chain crosses the membrane as a helical span at residues 546-566 (TSIVKVLSFVITFLSLELVFF). Residues 567 to 572 (SSSLSS) are Extracellular-facing. A helical transmembrane segment spans residues 573 to 593 (VGDGGWALIIFASGILMVMFI). The Cytoplasmic segment spans residues 594–867 (WNYGSKLKYD…VMQVRLTSYV (274 aa)).

The protein belongs to the HAK/KUP transporter (TC 2.A.72.3) family.

It is found in the membrane. In terms of biological role, high-affinity potassium transporter. The protein is Probable potassium transporter 15 (HAK15) of Oryza sativa subsp. japonica (Rice).